The chain runs to 838 residues: MDKQFSFQGQYDFKTVSTGLYDSWSSASFFKPQKNKVPFTAILPPPNLTGTLHIGHAFEVSITDQIMRFKRLRGYGVNWIPGFDHAGIATQTKYEKLARETNPEYFQAPRKQKVKMIMDWALTQGDTIQSQIKSLGASLNWNQVNFTLSKKASQIVNDSFIQLFEQGFIYQAETLVNWDTKLNTAISNIEVINKPVDQQLYYIAYKLANNPKKRLVVATTRPETIFVDVCLFVHPKDKHYHSFVKQKVVNPLTGALMPVFTDSYVDKKFGTGVLKCTPAHDFNDFALNEKYRLPFVSCIDHNGLLNEHAKQFTGLTVSAARQQVVEFLQTQKLLVKTMPLTSNVGFSERSDTVVEPLLSKQWFVDLPKLKKALAIKKYPELIPKRFNKQVTRWLSQLKPWCISRQLIWGHPIPVWTHKQSGALHVGSTAPTDKQNYTQSTDVLDTWFSSSLWPLICLDWHKNKHFVPTDLLVTGYDILFFWVLRMTFNSYFQTKQLPFKQVLIHGLVRDAQNRKMSKSLNNGINPMDLIRDYGADATRLFLTSNHTPGDDLIFNEQKLKSAANFLNKLWNVTKYVLQLGEQAKTVPSTHLPSTLSERWIWAKLKQLIVQTTKLLDKYQLALANQALVNFIWNDFCNTFIETIKQEDTALLPQLYTTAKTVLSTAVVMLSTVTPFLAERIYQQFHSGSVMQASWPTAKAVKPPKLFADVVEAVSSLRHYKANNQLVANQNLAVVLSGKAAPVVQNYFHFNWVDLRIEVNKTPGFQIKIVDNAANNLAHLEKQRSFYLAEVQRSQAITTNPAFLKKAPPHKVKAELLKLEEYQKKLAEVNHLIAKLTKAE.

Positions 46-56 (PNLTGTLHIGH) match the 'HIGH' region motif. The 'KMSKS' region motif lies at 514–518 (KMSKS). Lysine 517 is a binding site for ATP. The stretch at 768–838 (VDNAANNLAH…HLIAKLTKAE (71 aa)) forms a coiled coil.

Belongs to the class-I aminoacyl-tRNA synthetase family. ValS type 1 subfamily. As to quaternary structure, monomer.

It is found in the cytoplasm. The enzyme catalyses tRNA(Val) + L-valine + ATP = L-valyl-tRNA(Val) + AMP + diphosphate. Catalyzes the attachment of valine to tRNA(Val). As ValRS can inadvertently accommodate and process structurally similar amino acids such as threonine, to avoid such errors, it has a 'posttransfer' editing activity that hydrolyzes mischarged Thr-tRNA(Val) in a tRNA-dependent manner. The chain is Valine--tRNA ligase from Mycoplasma pneumoniae (strain ATCC 29342 / M129 / Subtype 1) (Mycoplasmoides pneumoniae).